Reading from the N-terminus, the 547-residue chain is Chaperonin GroEL (547 aa).

Residues 30-33 (TLGP), lysine 51, 87-91 (DGTTT), glycine 415, and aspartate 496 contribute to the ATP site. The interval 528–547 (DKSDMPAMPPGGMGGMGGMY) is disordered. The segment covering 538–547 (GGMGGMGGMY) has biased composition (gly residues).

It belongs to the chaperonin (HSP60) family. As to quaternary structure, forms a cylinder of 14 subunits composed of two heptameric rings stacked back-to-back. Interacts with the co-chaperonin GroES.

The protein resides in the cytoplasm. The enzyme catalyses ATP + H2O + a folded polypeptide = ADP + phosphate + an unfolded polypeptide.. Together with its co-chaperonin GroES, plays an essential role in assisting protein folding. The GroEL-GroES system forms a nano-cage that allows encapsulation of the non-native substrate proteins and provides a physical environment optimized to promote and accelerate protein folding. The chain is Chaperonin GroEL from Chlorobium luteolum (strain DSM 273 / BCRC 81028 / 2530) (Pelodictyon luteolum).